Reading from the N-terminus, the 159-residue chain is V-type proton ATPase 16 kDa proteolipid subunit c (159 aa).

The Lumenal segment spans residues 1 to 11 (MSEEGSPMYSP). The chain crosses the membrane as a helical span at residues 12–32 (FFGVMGAASAMVFSALGAAYG). Residues 33–54 (TAKSGVGISAMSVMRPELIMKC) are Cytoplasmic-facing. Residues 55-75 (IIPVVMAGIIAIYGLVVAVLI) traverse the membrane as a helical segment. The Lumenal portion of the chain corresponds to 76 to 93 (AGKLDEAPTYTLYQGFVH). A helical membrane pass occupies residues 94–114 (MGAGLSVGLSGLAAGFAIGIV). Topologically, residues 115–132 (GDAGVRGTAQQPRLYVGM) are cytoplasmic. The helical transmembrane segment at 133-153 (ILILIFAEVLGLYGLIVAIFL) threads the bilayer. The Lumenal portion of the chain corresponds to 154–159 (YTKTSS).

It belongs to the V-ATPase proteolipid subunit family. V-ATPase is a heteromultimeric enzyme made up of two complexes: the ATP-hydrolytic V1 complex and the proton translocation V0 complex. The V1 complex consists of three catalytic AB heterodimers that form a heterohexamer, three peripheral stalks each consisting of EG heterodimers, one central rotor including subunits D and F, and the regulatory subunits C and H. The proton translocation complex V0 consists of the proton transport subunit a, a ring of proteolipid subunits c9c'', rotary subunit d, subunits e and f, and two accessory subunits.

The protein localises to the vacuole membrane. In terms of biological role, proton-conducting pore forming subunit of the V0 complex of vacuolar(H+)-ATPase (V-ATPase), a multisubunit enzyme composed of a peripheral complex (V1) that hydrolyzes ATP and a membrane integral complex (V0) that translocates protons. V-ATPase is responsible for acidifying and maintaining the pH of intracellular compartments and in some cell types, is targeted to the plasma membrane, where it is responsible for acidifying the extracellular environment. The protein is V-type proton ATPase 16 kDa proteolipid subunit c of Nephrops norvegicus (Norway lobster).